We begin with the raw amino-acid sequence, 167 residues long: uncharacterized protein (167 aa).

The interval 1–21 (MFDFSFPTPASAGTRMGPASC) is disordered.

This is an uncharacterized protein from Homo sapiens (Human).